Here is a 374-residue protein sequence, read N- to C-terminus: Probable dual-specificity RNA methyltransferase RlmN (374 aa).

Residues Met-1–Lys-17 show a composition bias toward basic and acidic residues. The disordered stretch occupies residues Met-1–Arg-22. Glu-119 functions as the Proton acceptor in the catalytic mechanism. The Radical SAM core domain maps to Ser-125–Thr-360. Cys-132 and Cys-365 are disulfide-bonded. [4Fe-4S] cluster contacts are provided by Cys-139, Cys-143, and Cys-146. S-adenosyl-L-methionine contacts are provided by residues Gly-190–Glu-191, Ser-223, Ser-246–His-248, and Asn-322. Residue Cys-365 is the S-methylcysteine intermediate of the active site.

This sequence belongs to the radical SAM superfamily. RlmN family. It depends on [4Fe-4S] cluster as a cofactor.

The protein resides in the cytoplasm. The enzyme catalyses adenosine(2503) in 23S rRNA + 2 reduced [2Fe-2S]-[ferredoxin] + 2 S-adenosyl-L-methionine = 2-methyladenosine(2503) in 23S rRNA + 5'-deoxyadenosine + L-methionine + 2 oxidized [2Fe-2S]-[ferredoxin] + S-adenosyl-L-homocysteine. It catalyses the reaction adenosine(37) in tRNA + 2 reduced [2Fe-2S]-[ferredoxin] + 2 S-adenosyl-L-methionine = 2-methyladenosine(37) in tRNA + 5'-deoxyadenosine + L-methionine + 2 oxidized [2Fe-2S]-[ferredoxin] + S-adenosyl-L-homocysteine. In terms of biological role, specifically methylates position 2 of adenine 2503 in 23S rRNA and position 2 of adenine 37 in tRNAs. The protein is Probable dual-specificity RNA methyltransferase RlmN of Chlorobaculum tepidum (strain ATCC 49652 / DSM 12025 / NBRC 103806 / TLS) (Chlorobium tepidum).